The primary structure comprises 725 residues: MAAQCCCRQAPGAEAAPVRPPPEPPPALDVASASSAQLFRLRHLQLGLELRPEARELAGCLVLELCALRPAPRALVLDAHPALRLHSAAFRRAPAAAAETPCAFAFSAPGPGPAPPPPLPAFPEAPGSEPACCPLAFRVDPFTDYGSSLTVTLPPELQAHQPFQVILRYTSTDAPAIWWLDPELTYGCAKPFVFTQGHSVCNRSFFPCFDTPAVKCTYSAVVKAPSGVQVLMSATRSAYMEEEGVFHFHMEHPVPAYLVALVAGDLKPADIGPRSRVWAEPCLLPTATSKLSGAVEQWLSAAERLYGPYMWGRYDIVFLPPSFPIVAMENPCLTFIISSILESDEFLVIDVIHEVAHSWFGNAVTNATWEEMWLSEGLATYAQRRITTETYGAAFTCLETAFRLDALHRQMKLLGEDSPVSKLQVKLEPGVNPSHLMNLFTYEKGYCFVYYLSQLCGDPQRFDDFLRAYVEKYKFTSVVAQDLLDSFLSFFPELKEQSVDCRAGLEFERWLNATGPPLAEPDLSQGSSLTRPVEALFQLWTAEPLDQAAASASAIDISKWRTFQTALFLDRLLDGSPLPQEVVMSLSKCYSSLLDSMNAEIRIRWLQIVVRNDYYPDLHRVRRFLESQMSRMYTIPLYEDLCTGALKSFALEVFYQTQGRLHPNLRRAIQQILSQGLGSSTEPASEPSTELGKAEADTDSDAQALLLGDEAPSSAISLRDVNVSA.

Residue 326-330 (VAMEN) coordinates substrate. His353 is a Zn(2+) binding site. The active-site Proton acceptor is the Glu354. His357 and Glu376 together coordinate Zn(2+). Residues 676–699 (GLGSSTEPASEPSTELGKAEADTD) are disordered. The span at 679-690 (SSTEPASEPSTE) shows a compositional bias: low complexity.

Belongs to the peptidase M1 family. Requires Zn(2+) as cofactor. Ubiquitously expressed. Expressed at relatively higher levels in heart and skeletal muscle.

The catalysed reaction is Release of N-terminal amino acids, preferentially methionine, from peptides and arylamides.. With respect to regulation, inhibited by calcium but not affected by chloride ions. Inhibited by amastatin and to a lower extent by bestatin. Weakly inhibited by puromycin. Broad specificity aminopeptidase which preferentially hydrolyzes an N-terminal methionine, citrulline or glutamine. In Homo sapiens (Human), this protein is Aminopeptidase RNPEPL1.